The primary structure comprises 81 residues: Putative phytosulfokines 6 (81 aa).

The first 20 residues, 1 to 20 (MKQSLCLAVLFLILSTSSSA), serve as a signal peptide directing secretion. The propeptide occupies 21–72 (IRRGKEDQEINPLVSATSVEEDSVNKLMGMEYCGEGDEECLRRRMMTESHLD). Sulfotyrosine occurs at positions 73 and 75. A propeptide spanning residues 78–81 (HHKH) is cleaved from the precursor.

Belongs to the phytosulfokine family. Sulfation is important for activity and for the binding to a putative membrane receptor. In terms of processing, PSK-beta is an enzymatic derivative of PSK-alpha. In terms of tissue distribution, expressed in roots, leaves, stems, flowers and siliques. Most abundant in vascular bundles and in root tips.

The protein localises to the secreted. Promotes plant cell differentiation, organogenesis and somatic embryogenesis as well as cell proliferation. The protein is Putative phytosulfokines 6 (PSK6) of Arabidopsis thaliana (Mouse-ear cress).